Reading from the N-terminus, the 182-residue chain is Riboflavin kinase (182 aa).

Mg(2+) is bound by residues T39 and N41. E117 functions as the Nucleophile in the catalytic mechanism.

Belongs to the flavokinase family. The cofactor is Zn(2+). It depends on Mg(2+) as a cofactor.

It catalyses the reaction riboflavin + ATP = FMN + ADP + H(+). The protein operates within cofactor biosynthesis; FMN biosynthesis; FMN from riboflavin (ATP route): step 1/1. Functionally, catalyzes the phosphorylation of riboflavin (vitamin B2) to form flavin mononucleotide (FMN) coenzyme. This chain is Riboflavin kinase (FMN1), found in Lodderomyces elongisporus (strain ATCC 11503 / CBS 2605 / JCM 1781 / NBRC 1676 / NRRL YB-4239) (Yeast).